The primary structure comprises 210 residues: MTFLKRVKEYVGDAFRAAKYIGQGMGVVFDHMGRRPVTVQYPFEKLIPSERFRGRIHFEFDKCIACEICVRVCPIDLPVVDWAYNPELKKKELYSYSIDFGVCIFCANCVEFCPTNCLSVTEDYELATYDRHDLNYHQVAMGRLPSKVTEDPMVTPLREFAYLPKGVIDPHDLPAGSQRAGKRPEEILAEMRAAKAAKEAEAKAAKAAAE.

2 consecutive 4Fe-4S ferredoxin-type domains span residues 54–83 and 94–123; these read GRIHFEFDKCIACEICVRVCPIDLPVVDWA and YSYSIDFGVCIFCANCVEFCPTNCLSVTED. Cysteine 63, cysteine 66, cysteine 69, cysteine 73, cysteine 103, cysteine 106, cysteine 109, and cysteine 113 together coordinate [4Fe-4S] cluster.

It belongs to the complex I 23 kDa subunit family. NDH-1 is composed of at least 11 different subunits. Requires [4Fe-4S] cluster as cofactor.

It localises to the cellular thylakoid membrane. The enzyme catalyses a plastoquinone + NADH + (n+1) H(+)(in) = a plastoquinol + NAD(+) + n H(+)(out). It catalyses the reaction a plastoquinone + NADPH + (n+1) H(+)(in) = a plastoquinol + NADP(+) + n H(+)(out). NDH-1 shuttles electrons from an unknown electron donor, via FMN and iron-sulfur (Fe-S) centers, to quinones in the respiratory and/or the photosynthetic chain. The immediate electron acceptor for the enzyme in this species is believed to be plastoquinone. Couples the redox reaction to proton translocation, and thus conserves the redox energy in a proton gradient. The sequence is that of NAD(P)H-quinone oxidoreductase subunit I from Synechococcus sp. (strain JA-2-3B'a(2-13)) (Cyanobacteria bacterium Yellowstone B-Prime).